The chain runs to 1914 residues: Autophagy-related protein 2 homolog A (1914 aa).

Positions 14–112 (ERVCRYLLQH…LTLQPRQGSG (99 aa)) constitute a Chorein N-terminal domain. Phosphoserine is present on residues Ser764, Ser869, Ser875, and Ser877. Positions 1222–1243 (DLHPPPRPPSPTEIAGQKLSES) are disordered. Phosphoserine is present on residues Ser1246, Ser1282, and Ser1290. A disordered region spans residues 1299–1337 (GERSGAQAPLPPPGASSHTLGSKAKEHENEEEGDGDTLD). Residues 1327–1337 (NEEEGDGDTLD) show a composition bias toward acidic residues. Residues 1337–1383 (DSDEFCILDAPGLGIAPRDGEPIVTQLHPGPIIVHDGHFSQPLGSTD) are WIPI-interacting. Position 1381 is a phosphoserine (Ser1381). 3 disordered regions span residues 1427–1452 (LTGP…TQGG), 1589–1634 (MVPG…SSSD), and 1803–1822 (RSLQ…QPAD). Positions 1429–1446 (GPRVSPSRSSGPNRPQNS) are enriched in low complexity.

Belongs to the ATG2 family. In terms of assembly, interacts with ATG9A (via C-terminus). Interacts with TMEM41B. Interacts with VMP1.

It localises to the preautophagosomal structure membrane. It is found in the lipid droplet. The protein localises to the endoplasmic reticulum membrane. The enzyme catalyses a 1,2-diacyl-sn-glycero-3-phospho-L-serine(in) = a 1,2-diacyl-sn-glycero-3-phospho-L-serine(out). The catalysed reaction is a 1,2-diacyl-sn-glycero-3-phosphoethanolamine(in) = a 1,2-diacyl-sn-glycero-3-phosphoethanolamine(out). Its function is as follows. Lipid transfer protein involved in autophagosome assembly. Tethers the edge of the isolation membrane (IM) to the endoplasmic reticulum (ER) and mediates direct lipid transfer from ER to IM for IM expansion. Binds to the ER exit site (ERES), which is the membrane source for autophagosome formation, and extracts phospholipids from the membrane source and transfers them to ATG9 (ATG9A or ATG9B) to the IM for membrane expansion. Lipid transfer activity is enhanced by WIPI1 and WDR45/WIPI4, which promote ATG2A-association with phosphatidylinositol 3-monophosphate (PI3P)-containing membranes. Also regulates lipid droplets morphology and distribution within the cell. In terms of biological role, (Microbial infection) Mediates the intracellular lifestyle of Cryptococcus neoformans by supporting infection. The sequence is that of Autophagy-related protein 2 homolog A from Mus musculus (Mouse).